The primary structure comprises 412 residues: L-threonine:uridine-5'-aldehyde transaldolase (412 aa).

The residue at position 229 (lysine 229) is an N6-(pyridoxal phosphate)lysine.

This sequence belongs to the SHMT family. The cofactor is pyridoxal 5'-phosphate.

The catalysed reaction is uridine-5'-aldehyde + L-threonine = (5'S,6'S)-C-glycyluridine + acetaldehyde. It functions in the pathway antibiotic biosynthesis. In terms of biological role, transaldolase involved in the biosynthesis of the capuramycin-type nucleoside antibiotic A-102395. Catalyzes the condensation of L-threonine and uridine-5'-aldehyde to form 5'-C-glycyluridine (GlyU). In Amycolatopsis sp, this protein is L-threonine:uridine-5'-aldehyde transaldolase.